A 432-amino-acid polypeptide reads, in one-letter code: Glutamyl-tRNA reductase (432 aa).

Residues 55–58, Ser114, 119–121, and Gln125 contribute to the substrate site; these read TCNR and ETQ. Residue Cys56 is the Nucleophile of the active site. Residue 194–199 coordinates NADP(+); the sequence is GAGEMI.

It belongs to the glutamyl-tRNA reductase family. In terms of assembly, homodimer.

The enzyme catalyses (S)-4-amino-5-oxopentanoate + tRNA(Glu) + NADP(+) = L-glutamyl-tRNA(Glu) + NADPH + H(+). Its pathway is porphyrin-containing compound metabolism; protoporphyrin-IX biosynthesis; 5-aminolevulinate from L-glutamyl-tRNA(Glu): step 1/2. Functionally, catalyzes the NADPH-dependent reduction of glutamyl-tRNA(Glu) to glutamate 1-semialdehyde (GSA). The protein is Glutamyl-tRNA reductase of Burkholderia ambifaria (strain MC40-6).